Consider the following 338-residue polypeptide: Cytoskeleton protein RodZ (338 aa).

Residues 1–111 (MNTEATHEEN…LGKSRKKRDG (111 aa)) are Cytoplasmic-facing. Residues 19–71 (LRLAREQLGLSQQVVAERLCLKVSTVRDIEEDKAPADLASTFLRGYIRSYARL) enclose the HTH cro/C1-type domain. The H-T-H motif DNA-binding region spans 30–49 (QQVVAERLCLKVSTVRDIEE). The chain crosses the membrane as a helical; Signal-anchor for type II membrane protein span at residues 112 to 132 (WLMSFTWLVLFVVVGLTGAWW). Over 133-338 (WQNHKAQQEE…TLNAEQSVTQ (206 aa)) the chain is Periplasmic. Polar residues-rich tracts occupy residues 147-180 (ADQSSAELSQNAANSPQSVPLNTDNTADASQDQA) and 189-214 (GDTQNTASNNPQPTPVPSSNTASQQP). Residues 147–245 (ADQSSAELSQ…AQSQLPVGQA (99 aa)) form a disordered region. Low complexity predominate over residues 220 to 239 (SQANTDTAAQQNTTQPAQSQ).

It belongs to the RodZ family.

It is found in the cell inner membrane. In terms of biological role, cytoskeletal protein that is involved in cell-shape control through regulation of the length of the long axis. In Cronobacter sakazakii (strain ATCC BAA-894) (Enterobacter sakazakii), this protein is Cytoskeleton protein RodZ.